A 624-amino-acid chain; its full sequence is Chaperone protein HtpG (624 aa).

An a; substrate-binding region spans residues 1–336; sequence MKGQETRGFQ…SSDLPLNVSR (336 aa). Residues 337–552 are b; sequence EILQDSTVTR…ADEMSTQMAK (216 aa). A c region spans residues 553–624; it reads LFAAAGQKVP…IRRMNQLLVS (72 aa).

Belongs to the heat shock protein 90 family. Homodimer.

It is found in the cytoplasm. In terms of biological role, molecular chaperone. Has ATPase activity. This is Chaperone protein HtpG from Shigella boydii serotype 4 (strain Sb227).